The following is a 432-amino-acid chain: Trigger factor (432 aa).

In terms of domain architecture, PPIase FKBP-type spans 161-246; sequence DDRVTIDFVG…LKKIENMVLP (86 aa).

It belongs to the FKBP-type PPIase family. Tig subfamily.

Its subcellular location is the cytoplasm. The catalysed reaction is [protein]-peptidylproline (omega=180) = [protein]-peptidylproline (omega=0). Involved in protein export. Acts as a chaperone by maintaining the newly synthesized protein in an open conformation. Functions as a peptidyl-prolyl cis-trans isomerase. The chain is Trigger factor from Haemophilus influenzae (strain 86-028NP).